Reading from the N-terminus, the 199-residue chain is 7-methyl-GTP pyrophosphatase (199 aa).

Asp76 acts as the Proton acceptor in catalysis.

The protein belongs to the Maf family. YceF subfamily. The cofactor is a divalent metal cation.

The protein resides in the cytoplasm. It catalyses the reaction N(7)-methyl-GTP + H2O = N(7)-methyl-GMP + diphosphate + H(+). Nucleoside triphosphate pyrophosphatase that hydrolyzes 7-methyl-GTP (m(7)GTP). May have a dual role in cell division arrest and in preventing the incorporation of modified nucleotides into cellular nucleic acids. The protein is 7-methyl-GTP pyrophosphatase of Nitrosococcus oceani (strain ATCC 19707 / BCRC 17464 / JCM 30415 / NCIMB 11848 / C-107).